The primary structure comprises 359 residues: Protein RecA (359 aa).

64-71 contacts ATP; sequence GHESSGKT. A disordered region spans residues 329–359; it reads KYSNKDSNDSPKEGSKIKTKVNPAVTQDELI. The span at 331–344 shows a compositional bias: basic and acidic residues; the sequence is SNKDSNDSPKEGSK.

This sequence belongs to the RecA family.

The protein localises to the cytoplasm. In terms of biological role, can catalyze the hydrolysis of ATP in the presence of single-stranded DNA, the ATP-dependent uptake of single-stranded DNA by duplex DNA, and the ATP-dependent hybridization of homologous single-stranded DNAs. It interacts with LexA causing its activation and leading to its autocatalytic cleavage. The chain is Protein RecA from Francisella tularensis subsp. tularensis (strain FSC 198).